The sequence spans 465 residues: MGASRTGCYLLAVVLAAVMNAAIAGITSSFIRKVEKTVDMPLDSDVFRVPPGYNAPQQVHITQGDHVGKAMIVSWVTVDEPGSSKVVYWSENSQHKKVARGNIRTYTYFNYTSGYIHHCTIRNLEYNTKYYYEVGIGNTTRSFWFTTPPEVGPDVPYTFGLIGDLGQSFDSNRTLTHYERNPIKGQAVLFVGDLSYADNYPNHDNVRWDTWGRFVERSTAYQPWIWTAGNHEIDFAPEIGETKPFKPFTKRYHVPYKASGSTETFWYPIKRASAYIIVLSSYSAYGKYTPQYKWLEEELPKVNRTETPWLIVLMHSPWYNSYNYHYMEGETMRVMYEPWFVQHKVDLVFAGHVHAYERSERVSNVAYDIVNGKCTPVRDQSAPVYITIGDGGNLEGLATNMTDPQPEYSAFREASFGHATLDIKNRTHAYYSWHRNQDGYAVEADSMWVSNRFWHPVDDSTTTKL.

The first 32 residues, 1–32 (MGASRTGCYLLAVVLAAVMNAAIAGITSSFIR), serve as a signal peptide directing secretion. Asparagine 110 and asparagine 138 each carry an N-linked (GlcNAc...) asparagine glycan. Aspartate 164 lines the Fe cation pocket. A glycan (N-linked (GlcNAc...) asparagine) is linked at asparagine 172. Positions 193 and 196 each coordinate Fe cation. Mn(2+) is bound at residue aspartate 193. Asparagine 230 is a binding site for Mn(2+). Asparagine 230 is a binding site for substrate. Residue asparagine 303 is glycosylated (N-linked (GlcNAc...) asparagine). A Mn(2+)-binding site is contributed by histidine 315. Residue histidine 325 is the Proton donor of the active site. Histidine 352 lines the Mn(2+) pocket. A substrate-binding site is contributed by 352–354 (HVH). Residue histidine 354 coordinates Fe cation. 2 N-linked (GlcNAc...) asparagine glycosylation sites follow: asparagine 400 and asparagine 425.

This sequence belongs to the metallophosphoesterase superfamily. Purple acid phosphatase family. As to quaternary structure, homodimer; disulfide-linked. It depends on Fe cation as a cofactor. The cofactor is Mn(2+). Zn(2+) serves as cofactor. Cu(2+) is required as a cofactor. Requires Mg(2+) as cofactor.

It localises to the secreted. The enzyme catalyses a phosphate monoester + H2O = an alcohol + phosphate. In Ipomoea batatas (Sweet potato), this protein is Purple acid phosphatase 2 (PAP2).